We begin with the raw amino-acid sequence, 103 residues long: Large ribosomal subunit protein eL21 (103 aa).

This sequence belongs to the eukaryotic ribosomal protein eL21 family.

This is Large ribosomal subunit protein eL21 from Sulfurisphaera tokodaii (strain DSM 16993 / JCM 10545 / NBRC 100140 / 7) (Sulfolobus tokodaii).